Here is an 861-residue protein sequence, read N- to C-terminus: Cone cGMP-specific 3',5'-cyclic phosphodiesterase subunit alpha' (861 aa).

2 consecutive GAF domains span residues 75–224 (SAEQ…AVAL) and 256–433 (DVER…GWSL). 3',5'-cyclic GMP contacts are provided by residues S97, N116, 169 to 172 (DKQT), and T176. The PDEase domain occupies 486 to 819 (EERQLLAILK…VEWKSLAEEY (334 aa)). H562 functions as the Proton donor in the catalytic mechanism. H566, H602, D603, and D723 together coordinate a divalent metal cation. Residues 826-839 (TEEEAGKQEEEASD) are compositionally biased toward basic and acidic residues. The segment at 826-861 (TEEEAGKQEEEASDGKAATDLGGSAEDKKSKTCLML) is disordered. C858 carries the post-translational modification Cysteine methyl ester. The S-geranylgeranyl cysteine moiety is linked to residue C858. Residues 859–861 (LML) constitute a propeptide, removed in mature form.

It belongs to the cyclic nucleotide phosphodiesterase family. As to quaternary structure, composed of two alpha' subunits that are associated with 3 smaller proteins of 11, 13, and 15 kDa. Requires a divalent metal cation as cofactor.

It is found in the cell membrane. It carries out the reaction 3',5'-cyclic GMP + H2O = GMP + H(+). Its function is as follows. As cone-specific cGMP phosphodiesterase, it plays an essential role in light detection and cone phototransduction by rapidly decreasing intracellular levels of cGMP. In Mus musculus (Mouse), this protein is Cone cGMP-specific 3',5'-cyclic phosphodiesterase subunit alpha' (Pde6c).